The chain runs to 62 residues: Defensin-like protein A (62 aa).

The N-terminal stretch at 1–26 (MRCVVLFMVSCLLIVLLINHFEEVEA) is a signal peptide. A disulfide bond links Cys42 and Cys52.

Belongs to the DEFL family.

It localises to the secreted. Functionally, truncated and inactivated form of SCRA, a protein involved in male-mediated self-incompatibility when active. Most A.thaliana cultivars contain such an inactive form and thus, are self-fertiles. This Arabidopsis thaliana (Mouse-ear cress) protein is Defensin-like protein A (SCRA).